The sequence spans 78 residues: Alpha-neurotoxin homolog 1 (78 aa).

The signal sequence occupies residues 1–21; that stretch reads MKTLLLTLVVVTIVCLDFGYT. 4 disulfides stabilise this stretch: Cys24-Cys42, Cys37-Cys57, Cys59-Cys70, and Cys71-Cys76.

This sequence belongs to the three-finger toxin family. Short-chain subfamily. Orphan group XII sub-subfamily. In terms of tissue distribution, expressed by the venom gland.

The protein localises to the secreted. The chain is Alpha-neurotoxin homolog 1 from Micrurus corallinus (Brazilian coral snake).